Here is a 436-residue protein sequence, read N- to C-terminus: ATP-dependent protease ATPase subunit HslU (436 aa).

ATP is bound by residues isoleucine 18, 60-65 (GVGKTE), aspartate 250, glutamate 314, and arginine 386.

This sequence belongs to the ClpX chaperone family. HslU subfamily. As to quaternary structure, a double ring-shaped homohexamer of HslV is capped on each side by a ring-shaped HslU homohexamer. The assembly of the HslU/HslV complex is dependent on binding of ATP.

It is found in the cytoplasm. In terms of biological role, ATPase subunit of a proteasome-like degradation complex; this subunit has chaperone activity. The binding of ATP and its subsequent hydrolysis by HslU are essential for unfolding of protein substrates subsequently hydrolyzed by HslV. HslU recognizes the N-terminal part of its protein substrates and unfolds these before they are guided to HslV for hydrolysis. In Mesorhizobium japonicum (strain LMG 29417 / CECT 9101 / MAFF 303099) (Mesorhizobium loti (strain MAFF 303099)), this protein is ATP-dependent protease ATPase subunit HslU.